An 845-amino-acid chain; its full sequence is Translation initiation factor IF-2 (845 aa).

Composition is skewed to basic and acidic residues over residues 139 to 198 (EAKR…EKPA) and 206 to 228 (FRSE…KELH). A disordered region spans residues 139-253 (EAKRQAAEEE…PQKAAPAAKH (115 aa)). Residues 345–512 (SRAAVVTIMG…AILLQAEVME (168 aa)) form the tr-type G domain. The tract at residues 354 to 361 (GHVDHGKT) is G1. 354–361 (GHVDHGKT) contributes to the GTP binding site. The tract at residues 379-383 (GITQH) is G2. The tract at residues 400–403 (DTPG) is G3. GTP-binding positions include 400–404 (DTPGH) and 454–457 (NKID). Positions 454–457 (NKID) are G4. The G5 stretch occupies residues 490–492 (SAK).

Belongs to the TRAFAC class translation factor GTPase superfamily. Classic translation factor GTPase family. IF-2 subfamily.

It is found in the cytoplasm. Functionally, one of the essential components for the initiation of protein synthesis. Protects formylmethionyl-tRNA from spontaneous hydrolysis and promotes its binding to the 30S ribosomal subunits. Also involved in the hydrolysis of GTP during the formation of the 70S ribosomal complex. The chain is Translation initiation factor IF-2 from Nitrosococcus oceani (strain ATCC 19707 / BCRC 17464 / JCM 30415 / NCIMB 11848 / C-107).